Reading from the N-terminus, the 154-residue chain is uncharacterized protein (154 aa).

Helical transmembrane passes span 19-39 (LFAY…GLLL) and 51-71 (ADQV…LLFA).

The protein localises to the cell membrane. This is an uncharacterized protein from Mycobacterium tuberculosis (strain CDC 1551 / Oshkosh).